Here is a 1155-residue protein sequence, read N- to C-terminus: MNHFQAILAQVQTLLSSQKPRQVRALLDGLLEEELLSREYHCALLHEPDGDALARKISLTLLEKGDLDLTFLSWVCNSLQAPTVERGTSYRDHGDHSLCATMDLGSPEGSYLELLNSDADPLHLYHLYDQMDLAGEEEIELSSEPDTDTINCDQFSKLLQDMELDEETREAYANIAELDQYVFQDTQLEGLSKDLFIEHIGAEEGFGENIEIPVEAGQKPQKRRFPEEHAMDSKHRKLVPTSRTSLNYLDLPTGHIQIFTTLPQGLWQISGAGTGLSSVLIYHGEMPQVNQVLPSSSLSIPSLPESPDRPGSTSPFTPSAADLPSMPEPALTSRVNETEDTSPSPCQEGPESSIKLPKWPEAVERFQHSLQDKYKALPQSPRGPLVAVELVRARLERGSNKSQERELATPDWTERQLAHGGLAEVLQVVSDCRRPGETQVVAVLGKAGQGKSHWARTVSHTWACGQLLQYDFVFYVPCHCLDRPGDTYHLRDLLCPPSLQPLAMDDEVLDYIVRQPDRVLLILDAFEELEAQDGLLHGPCGSLSPEPCSLRGLLAGIFQRKLLRGCTLLLTARPRGRLAQSLSKADAIFEVPSFSTKQAKTYMRHYFENSGTAGNQDKALGLLEGQPLLCSYSHSPVVCRAVCQLSKALLEQGTEAQLPCTLTGLYVSLLGPAAQNSPPGALVELAKLAWELGRRHQSTLQETRFSSVEVKTWAVTQGLMQQTLETTEAQLAFSSFLLQCFLGAVWLAQCNEIKDKELPQYLALTPRKKRPYDNWLEGVPRFLAGLVFQPRAHCLGALVEPAVAAVADRKQKVLTRYLKRLKLGTLRAGRLLELLHCAHETQQPGIWEHVAHQLPGHLSFLGTRLTPPDVYVLGRALETASQDFSLDLRQTGVEPSGLGNLVGLSCVTSFRASLSDTMALWESLQQQGEAQLLQAAEEKFTIEPFKAKSPKDVEDLDRLVQTQRLRNPSEDAAKDLPAIRDLKKLEFALGPILGPQAFPTLAKILPAFSSLQHLDLDSLSENKIGDKGVSKLSATFPQLKALETLNLSQNNITDVGACKLAEALPALAKSLLRLSLYNNCICDKGAKSLAQVLPDMVSLRVMDVQFNKFTAAGAQQLASSLQKCPQVETLAMWTPTIPFGVQEHLQQLDARISLR.

The tract at residues 171–210 (AYANIAELDQYVFQDTQLEGLSKDLFIEHIGAEEGFGENI) is required for acetyltransferase activity. Disordered stretches follow at residues 217 to 237 (GQKPQKRRFPEEHAMDSKHRK) and 297 to 357 (SLSI…IKLP). A compositionally biased stretch (basic and acidic residues) spans 224–233 (RFPEEHAMDS). Positions 439–749 (QVVAVLGKAG…CFLGAVWLAQ (311 aa)) constitute an NACHT domain. Residue 445–452 (GKAGQGKS) participates in GTP binding. LRR repeat units lie at residues 1010–1033 (SLQHLDLDSLSENKIGDKGVSKLS), 1041–1062 (ALETLNLSQNNITDVGACKLAE), 1070–1091 (SLLRLSLYNNCICDKGAKSLAQ), and 1098–1119 (SLRVMDVQFNKFTAAGAQQLAS).

As to quaternary structure, interacts with ZXDA and ZXDC. Interacts with PML (isoform PML-2). Interacts with TAF7; interaction inhibits CIITA acetyltransferase activity, thereby repressing transcription. Autophosphorylated, affecting interaction with TAF7. Expressed at very high levels in dendritic cells, at very low levels in spleen and thymus and is not detected in other tissues. In terms of tissue distribution, detected at high levels in spleen and tonsil as well as in a number of B-lymphocyte cell lines, and at very low levels in dendritic cells.

It is found in the nucleus. Its subcellular location is the PML body. It catalyses the reaction L-seryl-[protein] + ATP = O-phospho-L-seryl-[protein] + ADP + H(+). The catalysed reaction is L-threonyl-[protein] + ATP = O-phospho-L-threonyl-[protein] + ADP + H(+). Its function is as follows. Essential for transcriptional activity of the HLA class II promoter; activation is via the proximal promoter. Does not bind DNA. May act in a coactivator-like fashion through protein-protein interactions by contacting factors binding to the proximal MHC class II promoter, to elements of the transcription machinery, or both. Alternatively it may activate HLA class II transcription by modifying proteins that bind to the MHC class II promoter. Also mediates enhanced MHC class I transcription, the promoter element requirements for CIITA-mediated transcription are distinct from those of constitutive MHC class I transcription, and CIITA can functionally replace TAF1 at these genes. Activates CD74 transcription. Exhibits intrinsic GTP-stimulated acetyltransferase activity. Exhibits serine/threonine protein kinase activity: phosphorylates the TFIID component TAF7, the RAP74 subunit of the general transcription factor TFIIF, histone H2B at 'Ser-37' and other histones. This is MHC class II transactivator from Mus musculus (Mouse).